The chain runs to 88 residues: Sec-independent protein translocase protein TatA (88 aa).

The chain crosses the membrane as a helical span at residues 1–21 (MGGIGIWQLAIITVIVILLFG). The interval 46–88 (DNDKDSTQVDDKDSTQVDDNAKQPSNKKVEENIKEQSKEKDRA) is disordered.

The protein belongs to the TatA/E family. The Tat system comprises two distinct complexes: a TatABC complex, containing multiple copies of TatA, TatB and TatC subunits, and a separate TatA complex, containing only TatA subunits. Substrates initially bind to the TatABC complex, which probably triggers association of the separate TatA complex to form the active translocon.

It is found in the cell inner membrane. Its function is as follows. Part of the twin-arginine translocation (Tat) system that transports large folded proteins containing a characteristic twin-arginine motif in their signal peptide across membranes. TatA could form the protein-conducting channel of the Tat system. The polypeptide is Sec-independent protein translocase protein TatA (Psychromonas ingrahamii (strain DSM 17664 / CCUG 51855 / 37)).